Consider the following 265-residue polypeptide: Glycine/sarcosine N-methyltransferase (265 aa).

S-adenosyl-L-methionine is bound by residues Tyr28, Trp36, Arg45, Ala69, Asp90, 116–117 (DW), and Leu134. Asn136, Arg169, and Tyr208 together coordinate substrate.

This sequence belongs to the class I-like SAM-binding methyltransferase superfamily. Glycine N-methyltransferase family. As to quaternary structure, monomer.

It catalyses the reaction glycine + 2 S-adenosyl-L-methionine = N,N-dimethylglycine + 2 S-adenosyl-L-homocysteine + 2 H(+). The catalysed reaction is glycine + S-adenosyl-L-methionine = sarcosine + S-adenosyl-L-homocysteine + H(+). The enzyme catalyses sarcosine + S-adenosyl-L-methionine = N,N-dimethylglycine + S-adenosyl-L-homocysteine + H(+). The protein operates within amine and polyamine biosynthesis; betaine biosynthesis via glycine pathway; betaine from glycine: step 1/3. It participates in amine and polyamine biosynthesis; betaine biosynthesis via glycine pathway; betaine from glycine: step 2/3. Inhibited by acetate, dimethylglycine and S-adenosyl-L-homocysteine. Functionally, catalyzes the methylation of glycine and sarcosine to sarcosine and dimethylglycine, respectively, with S-adenosylmethionine (AdoMet) acting as the methyl donor. In Aphanothece halophytica, this protein is Glycine/sarcosine N-methyltransferase.